The following is a 102-amino-acid chain: Carboxysome shell protein CcmK2 (102 aa).

Residues 4 to 90 (AVGMIETRGF…PHENLEYVLP (87 aa)) form the BMC domain.

Belongs to the bacterial microcompartments protein family. CcmK subfamily. As to quaternary structure, homohexamer. Stacked hexamers, with the concave faces together, have also been crystallized. Interacts preferentially with itself, then with CcmK1 and CcmK4a in vitro. May interact with CcmL, this occurs at very high CcmK2 concentrations. Interacts with CcmN and CcmO in the carboxysome.

Its subcellular location is the carboxysome. Probably the major shell protein of the carboxysome, a polyhedral inclusion where RuBisCO (ribulose bisphosphate carboxylase, rbcL-rbcS) is sequestered. Assembles into hexamers which make sheets that form the facets of the polyhedral carboxysome. The hexamer central pore probably regulates metabolite flux. The sequence is that of Carboxysome shell protein CcmK2 from Thermosynechococcus vestitus (strain NIES-2133 / IAM M-273 / BP-1).